A 1072-amino-acid polypeptide reads, in one-letter code: DNA-directed RNA polymerase subunit beta (1072 aa).

It belongs to the RNA polymerase beta chain family. In plastids the minimal PEP RNA polymerase catalytic core is composed of four subunits: alpha, beta, beta', and beta''. When a (nuclear-encoded) sigma factor is associated with the core the holoenzyme is formed, which can initiate transcription.

It is found in the plastid. It localises to the chloroplast. The catalysed reaction is RNA(n) + a ribonucleoside 5'-triphosphate = RNA(n+1) + diphosphate. Its function is as follows. DNA-dependent RNA polymerase catalyzes the transcription of DNA into RNA using the four ribonucleoside triphosphates as substrates. In Barbarea verna (Land cress), this protein is DNA-directed RNA polymerase subunit beta.